We begin with the raw amino-acid sequence, 742 residues long: NAD(P)H-quinone oxidoreductase subunit 5, chloroplastic (742 aa).

The next 16 membrane-spanning stretches (helical) occupy residues 9 to 29, 39 to 59, 91 to 111, 125 to 145, 147 to 167, 185 to 205, 224 to 244, 258 to 278, 280 to 300, 327 to 347, 354 to 374, 396 to 416, 425 to 445, 549 to 569, 603 to 623, and 721 to 741; these read WIIPFLPLPVPLLIGAGLLFF, IWAFSSISLLSIVMIFSMKLA, PLTSIMSMLITTVAILVLIYS, FAYMSFFNTSMLGLVTSSNLI, IYIFWELVGMCSYLLIGFWFT, GDFGLLLGILGLYWITGSFEF, LFCILCAFLLFAGAVAKSAQF, TPISALIHAATMVAAGIFLVA, LLPLFVVIPYIMYVISFIGII, LGYMMLALGMGSYRTALFHLI, ALLFLASGSLIHSMGTIVGYS, TSFLIGTLSLCGIPPLACFWS, WVYSPIFAIIAYFTAGLTAFY, LFPLIILIMFTLFVGFIGIPF, FVINAIFSISIAFFGIFIAFF, and ISSYLFWYLLYVSIFLFIFTF.

This sequence belongs to the complex I subunit 5 family. NDH is composed of at least 16 different subunits, 5 of which are encoded in the nucleus.

The protein localises to the plastid. Its subcellular location is the chloroplast thylakoid membrane. It carries out the reaction a plastoquinone + NADH + (n+1) H(+)(in) = a plastoquinol + NAD(+) + n H(+)(out). The enzyme catalyses a plastoquinone + NADPH + (n+1) H(+)(in) = a plastoquinol + NADP(+) + n H(+)(out). Functionally, NDH shuttles electrons from NAD(P)H:plastoquinone, via FMN and iron-sulfur (Fe-S) centers, to quinones in the photosynthetic chain and possibly in a chloroplast respiratory chain. The immediate electron acceptor for the enzyme in this species is believed to be plastoquinone. Couples the redox reaction to proton translocation, and thus conserves the redox energy in a proton gradient. The polypeptide is NAD(P)H-quinone oxidoreductase subunit 5, chloroplastic (ndhF) (Spinacia oleracea (Spinach)).